Reading from the N-terminus, the 251-residue chain is Probable transcriptional regulatory protein TGRD_462 (251 aa).

This sequence belongs to the TACO1 family.

The protein localises to the cytoplasm. This Endomicrobium trichonymphae protein is Probable transcriptional regulatory protein TGRD_462.